Here is a 207-residue protein sequence, read N- to C-terminus: Small ribosomal subunit protein uS4A (207 aa).

Residues 98-161 (RRLDNVVYRM…REHKRIKELA (64 aa)) enclose the S4 RNA-binding domain.

This sequence belongs to the universal ribosomal protein uS4 family. Part of the 30S ribosomal subunit. Contacts protein S5. The interaction surface between S4 and S5 is involved in control of translational fidelity.

In terms of biological role, one of the primary rRNA binding proteins, it binds directly to 16S rRNA where it nucleates assembly of the body of the 30S subunit. Its function is as follows. With S5 and S12 plays an important role in translational accuracy. This Symbiobacterium thermophilum (strain DSM 24528 / JCM 14929 / IAM 14863 / T) protein is Small ribosomal subunit protein uS4A.